The chain runs to 189 residues: Protein GrpE (189 aa).

Basic and acidic residues predominate over residues 1–38 (MTKSNETERMEESEETHSSDIRSASESDHASGSDHTES). The interval 1 to 54 (MTKSNETERMEESEETHSSDIRSASESDHASGSDHTESADEIPTADAEQGELEQ) is disordered.

Belongs to the GrpE family. In terms of assembly, homodimer.

The protein resides in the cytoplasm. Its function is as follows. Participates actively in the response to hyperosmotic and heat shock by preventing the aggregation of stress-denatured proteins, in association with DnaK and GrpE. It is the nucleotide exchange factor for DnaK and may function as a thermosensor. Unfolded proteins bind initially to DnaJ; upon interaction with the DnaJ-bound protein, DnaK hydrolyzes its bound ATP, resulting in the formation of a stable complex. GrpE releases ADP from DnaK; ATP binding to DnaK triggers the release of the substrate protein, thus completing the reaction cycle. Several rounds of ATP-dependent interactions between DnaJ, DnaK and GrpE are required for fully efficient folding. This is Protein GrpE from Tropheryma whipplei (strain TW08/27) (Whipple's bacillus).